Reading from the N-terminus, the 267-residue chain is Small ribosomal subunit protein uS2 (267 aa).

Basic and acidic residues predominate over residues 233 to 250 (RAESDKAETDKVEVEGKG). The disordered stretch occupies residues 233 to 267 (RAESDKAETDKVEVEGKGEAPAAEAAEVVESADKA). Residues 251-261 (EAPAAEAAEVV) are compositionally biased toward low complexity.

Belongs to the universal ribosomal protein uS2 family.

In Syntrophotalea carbinolica (strain DSM 2380 / NBRC 103641 / GraBd1) (Pelobacter carbinolicus), this protein is Small ribosomal subunit protein uS2.